The following is a 247-amino-acid chain: 3-deoxy-manno-octulosonate cytidylyltransferase (247 aa).

The protein belongs to the KdsB family.

Its subcellular location is the cytoplasm. The catalysed reaction is 3-deoxy-alpha-D-manno-oct-2-ulosonate + CTP = CMP-3-deoxy-beta-D-manno-octulosonate + diphosphate. It functions in the pathway nucleotide-sugar biosynthesis; CMP-3-deoxy-D-manno-octulosonate biosynthesis; CMP-3-deoxy-D-manno-octulosonate from 3-deoxy-D-manno-octulosonate and CTP: step 1/1. The protein operates within bacterial outer membrane biogenesis; lipopolysaccharide biosynthesis. In terms of biological role, activates KDO (a required 8-carbon sugar) for incorporation into bacterial lipopolysaccharide in Gram-negative bacteria. In Methylobacterium nodulans (strain LMG 21967 / CNCM I-2342 / ORS 2060), this protein is 3-deoxy-manno-octulosonate cytidylyltransferase.